A 558-amino-acid polypeptide reads, in one-letter code: Probable rhamnogalacturonase B (558 aa).

An N-terminal signal peptide occupies residues 1–21; the sequence is MLLDKLSVLSFLGLAPIFAAA. Cysteine 42 and cysteine 68 form a disulfide bridge. Residue asparagine 145 is glycosylated (N-linked (GlcNAc...) asparagine). Residue aspartate 219 is the Proton donor of the active site. Cysteines 221 and 238 form a disulfide. N-linked (GlcNAc...) asparagine glycosylation is found at asparagine 239 and asparagine 254. The active site involves histidine 294. An N-linked (GlcNAc...) asparagine glycan is attached at asparagine 321. 2 disulfides stabilise this stretch: cysteine 344/cysteine 350 and cysteine 372/cysteine 381. Low complexity predominate over residues 503–526; it reads VGAQEGSTTSAPSFAAPSGAGNSP. The disordered stretch occupies residues 503–558; the sequence is VGAQEGSTTSAPSFAAPSGAGNSPQGPTGASGFGEKGQQGEQGEQGEQGEQGVCYV.

Belongs to the glycosyl hydrolase 28 family.

Its subcellular location is the secreted. It catalyses the reaction Endohydrolysis of alpha-D-GalA-(1-&gt;2)-alpha-L-Rha glycosidic bond in the rhamnogalacturonan I backbone with initial inversion of anomeric configuration releasing oligosaccharides with beta-D-GalA at the reducing end.. Its function is as follows. Pectinolytic enzymes consist of four classes of enzymes: pectine lyase, polygalacturonase, pectin methylesterase and rhamnogalacturonase. Hydrolyzes alpha-D-galacturonopyranosyl-(1,2)-alpha-L-rhamnopyranosyl linkages in the backbone of the hairy regions of pectins. The chain is Probable rhamnogalacturonase B (rhgB) from Aspergillus niger (strain ATCC MYA-4892 / CBS 513.88 / FGSC A1513).